Reading from the N-terminus, the 223-residue chain is MNIAKLIDHTILKANATKEDVMKVIEEAKEYKFASVCINPTWVKLAAEELAGHDVDVCTVIGFPLGASTTETKAFETKDAIAKGATEVDMVINVGALKDGDDELVEKDIYEVVQAAKGKALVKVIIETCLLTDEEKVRACELSVKAGADFVKTSTGFSTGGATAEDIALMRKTVGPNVGVKASGGVRTREDADKMVAAGASRIGASASVAIVLNDAKGATDNY.

Asp89 serves as the catalytic Proton donor/acceptor. Lys152 functions as the Schiff-base intermediate with acetaldehyde in the catalytic mechanism. Lys181 serves as the catalytic Proton donor/acceptor.

Belongs to the DeoC/FbaB aldolase family. DeoC type 1 subfamily.

The protein resides in the cytoplasm. It carries out the reaction 2-deoxy-D-ribose 5-phosphate = D-glyceraldehyde 3-phosphate + acetaldehyde. The protein operates within carbohydrate degradation; 2-deoxy-D-ribose 1-phosphate degradation; D-glyceraldehyde 3-phosphate and acetaldehyde from 2-deoxy-alpha-D-ribose 1-phosphate: step 2/2. Catalyzes a reversible aldol reaction between acetaldehyde and D-glyceraldehyde 3-phosphate to generate 2-deoxy-D-ribose 5-phosphate. This chain is Deoxyribose-phosphate aldolase, found in Bacillus cereus (strain Q1).